We begin with the raw amino-acid sequence, 430 residues long: RNA polymerase-associated protein LEO1 (430 aa).

Polar residues predominate over residues 1–10; the sequence is MSSSEGNSDA. Residues 1-128 are disordered; the sequence is MSSSEGNSDA…SRGSLNDLQG (128 aa). The segment covering 18 to 30 has biased composition (low complexity); that stretch reads KSSTPSSRGSSPD. The segment covering 99–119 has biased composition (basic and acidic residues); the sequence is REGKPKESNTRARLSDSDAES. Coiled coils occupy residues 326-347 and 409-429; these read TRRE…RTQM and EEYR…DEES. The interval 349 to 430 is disordered; the sequence is RNNFKVRGPR…QIVTSDEESD (82 aa).

Belongs to the LEO1 family. Component of the PAF1 complex which consists of at least cdc-73, ctr-9, leo-1, pafo-1 and rtfo-1.

The protein localises to the nucleus. It localises to the cytoplasm. In terms of biological role, component of the PAF1 complex which is a multifunctional complex involved in transcription initiation via genetic interactions with TATA-binding proteins, elongation and transcription-coupled histone modification. The chain is RNA polymerase-associated protein LEO1 from Caenorhabditis elegans.